A 677-amino-acid polypeptide reads, in one-letter code: MTQVAKKILVTCALPYANGSIHLGHMLEHIQADVWVRYQRMRGHEVNFICADDAHGTPIMLKAQQLGITPEQMIGEMSQEHQTDFAGFNISYDNYHSTHSDENRELSELIYTRLKENGFIKNRTISQLYDPEKGMFLPDRFVKGTCPKCKSADQYGDNCEVCGATYSPTELIEPKSVVSGATPVMRDSEHFFFDLPSFSEMLQAWTRSGALQEQVANKMQEWFESGLQQWDISRDAPYFGFEIPNAPGKYFYVWLDAPIGYMGSFKNLCDKRGDTTSFEEYWKKDSDAELYHFIGKDIVYFHSLFWPAMLEGSHFRKPTNLFVHGYVTVNGAKMSKSRGTFIKASTWLKHFDADSLRYYYTAKLSSRIDDIDLNLEDFVQRVNADIVNKVVNLASRNAGFINKRFDGVLAAELADPQLYKTFTDAAVVIGEAWESREFGKAIREIMALADVANRYVDEQAPWVVAKQEGRDADLQAICSMGINLFRVLMTYLKPVLPTLSERVEAFLNSELNWDAIEQPLLGHKVNTFKALYNRIDMKQVEALVEASKEEVKAAAAPVTGPLADFPIQETITFDDFAKVDLRVALIENAEFVEGSDKLLRLTLDLGGEKRNVFSGIRSAYPDPQALIGRQTVMVANLAPRKMRFGVSEGMVMAAGPGGKDIFLLSPDDGAKPGQQVK.

Residues Pro-15 to His-25 carry the 'HIGH' region motif. Zn(2+) is bound by residues Cys-146, Cys-149, Cys-159, and Cys-162. The 'KMSKS' region signature appears at Lys-333–Ser-337. Lys-336 contacts ATP. Residues Asp-575–Lys-677 form the tRNA-binding domain.

This sequence belongs to the class-I aminoacyl-tRNA synthetase family. MetG type 1 subfamily. In terms of assembly, homodimer. Zn(2+) serves as cofactor.

The protein resides in the cytoplasm. The enzyme catalyses tRNA(Met) + L-methionine + ATP = L-methionyl-tRNA(Met) + AMP + diphosphate. Its function is as follows. Is required not only for elongation of protein synthesis but also for the initiation of all mRNA translation through initiator tRNA(fMet) aminoacylation. This is Methionine--tRNA ligase from Salmonella schwarzengrund (strain CVM19633).